We begin with the raw amino-acid sequence, 87 residues long: Sodium channel neurotoxin MeuNaTxalpha-5* (87 aa).

A signal peptide spans 1-19 (MNYLILISFALLVITGVES). Residues 21 to 85 (RDAYIAKPHN…VPIRIPGKCH (65 aa)) form the LCN-type CS-alpha/beta domain. Intrachain disulfides connect C31/C84, C35/C57, C43/C67, and C47/C69. Residues 86–87 (RR) constitute a propeptide, removed by a carboxypeptidase.

Belongs to the long (4 C-C) scorpion toxin superfamily. Sodium channel inhibitor family. Alpha subfamily. Expressed by the venom gland.

The protein localises to the secreted. Its function is as follows. Alpha toxins bind voltage-independently at site-3 of sodium channels (Nav) and inhibit the inactivation of the activated channels, thereby blocking neuronal transmission. This toxin inhibits inactivation of Nav1.6/SCN8A (EC(50)=790 nM) and drosophila DmNav1 (EC(50)=280 nM). The toxin (1 uM) does not significantly shift the midpoint of activation at the two channels, but induces a significant depolarizing shift in the V(1/2) of inactivation of the channels. Has antimicrobial activity. The chain is Sodium channel neurotoxin MeuNaTxalpha-5* from Mesobuthus eupeus (Lesser Asian scorpion).